Here is a 288-residue protein sequence, read N- to C-terminus: MTTIIDGKQIAKDLNAQTATRVAALKKRDIVPGLAVIVVGDDPASAIYVRNKHKKALKLGIKSVVRELPATTTQAELTQIVMAYNVDPTIHGILVQSPLPAGLDEQAIVAAIDPQKDVDGFHPLNVGRLFANLPGKYPVSCTPRGIMTMLATLPMHLRGKRAVVVGRSLIVGRPMAAMLLNADMTVSVAHVHTQHLSDLTRTADVLVVATGVTHLIKATDVKPGAVVIDVGMDRDENGKLTGDVDFDNVAPRVAAITPVPGGVGPMTIATLMQQTVDLCEWSEQRGNN.

166–168 (GRS) lines the NADP(+) pocket.

It belongs to the tetrahydrofolate dehydrogenase/cyclohydrolase family. As to quaternary structure, homodimer.

The catalysed reaction is (6R)-5,10-methylene-5,6,7,8-tetrahydrofolate + NADP(+) = (6R)-5,10-methenyltetrahydrofolate + NADPH. It carries out the reaction (6R)-5,10-methenyltetrahydrofolate + H2O = (6R)-10-formyltetrahydrofolate + H(+). It functions in the pathway one-carbon metabolism; tetrahydrofolate interconversion. In terms of biological role, catalyzes the oxidation of 5,10-methylenetetrahydrofolate to 5,10-methenyltetrahydrofolate and then the hydrolysis of 5,10-methenyltetrahydrofolate to 10-formyltetrahydrofolate. This is Bifunctional protein FolD from Levilactobacillus brevis (strain ATCC 367 / BCRC 12310 / CIP 105137 / JCM 1170 / LMG 11437 / NCIMB 947 / NCTC 947) (Lactobacillus brevis).